The following is a 228-amino-acid chain: Lipoprotein LpqN (228 aa).

A signal peptide spans 1–19; the sequence is MKHFTAAVATVALSLALAG. Cys20 carries N-palmitoyl cysteine lipidation. A lipid anchor (S-diacylglycerol cysteine) is attached at Cys20. The interval 26–53 is disordered; it reads TDSAPTTSPTTTSPTTSTTTTSATTSAQ. The segment covering 28-52 has biased composition (low complexity); that stretch reads SAPTTSPTTTSPTTSTTTTSATTSA.

As to quaternary structure, interacts with the periplasmic loop domains of the mycolate transporters MmpL3 and MmpL11. Also interacts with secreted cell envelope biosynthetic enzymes such as Ag85A. These interactions are weak and may require a putative mycobacterial adapter protein or molecule. Interacts with human ubiquitin ligase CBL.

The protein resides in the cell membrane. Its subcellular location is the secreted. Involved in cell envelope biogenesis. May act as a membrane fusion protein, connecting MmpL transporters with periplasmic proteins, and play a role in cell envelope lipid changes during biofilm maturation. Its function is as follows. Is also a virulence factor required for intracellular survival. Associates with CBL, a host ubiquitin ligase, and probably blocks the normal functions of CBL and disturbs CBL-mediated antibacterial activity. Interaction counteracts antibacterial defense but causes a reciprocal enhancement of antiviral defense. The chain is Lipoprotein LpqN from Mycobacterium tuberculosis (strain ATCC 25618 / H37Rv).